The chain runs to 411 residues: S-inosyl-L-homocysteine hydrolase (411 aa).

Substrate is bound by residues D121 and E146. NAD(+) is bound at residue T147–T149. K176 and D180 together coordinate substrate. Residues N181, G210–G215, E233, N268, S289–H291, and N335 contribute to the NAD(+) site.

Belongs to the adenosylhomocysteinase family. Requires NAD(+) as cofactor.

Its subcellular location is the cytoplasm. It catalyses the reaction S-inosyl-L-homocysteine + H2O = L-homocysteine + inosine. It functions in the pathway amino-acid biosynthesis; S-adenosyl-L-methionine biosynthesis. In terms of biological role, catalyzes the hydrolysis of S-inosyl-L-homocysteine (SIH) to L-homocysteine (Hcy) and inosine. Likely functions in a S-adenosyl-L-methionine (SAM) recycling pathway from S-adenosyl-L-homocysteine (SAH) produced from SAM-dependent methylation reactions. Can also catalyze the reverse reaction in vitro, i.e. the synthesis of SIH from Hcy and inosine. The polypeptide is S-inosyl-L-homocysteine hydrolase (Methanosarcina mazei (strain ATCC BAA-159 / DSM 3647 / Goe1 / Go1 / JCM 11833 / OCM 88) (Methanosarcina frisia)).